The chain runs to 330 residues: (4-{4-[2-(gamma-L-glutamylamino)ethyl]phenoxymethyl}furan-2-yl)methanamine synthase (330 aa).

It belongs to the MfnF family.

It catalyses the reaction gamma-L-glutamyltyramine + [5-(aminomethyl)furan-3-yl]methyl diphosphate = (4-{4-[2-(gamma-L-glutamylamino)ethyl]phenoxymethyl}furan-2-yl)methanamine + diphosphate. Its pathway is cofactor biosynthesis; methanofuran biosynthesis. Its function is as follows. Catalyzes the condensation between 5-(aminomethyl)-3-furanmethanol diphosphate (F1-PP) and gamma-glutamyltyramine to produce APMF-Glu. The protein is (4-{4-[2-(gamma-L-glutamylamino)ethyl]phenoxymethyl}furan-2-yl)methanamine synthase of Methanocaldococcus jannaschii (strain ATCC 43067 / DSM 2661 / JAL-1 / JCM 10045 / NBRC 100440) (Methanococcus jannaschii).